A 173-amino-acid chain; its full sequence is ATP synthase subunit beta, mitochondrial (173 aa).

It belongs to the ATPase alpha/beta chains family. F-type ATPases have 2 components, CF(1) - the catalytic core - and CF(0) - the membrane proton channel. CF(1) has five subunits: alpha(3), beta(3), gamma(1), delta(1), epsilon(1). CF(0) has three main subunits: a, b and c.

It localises to the mitochondrion. It is found in the mitochondrion inner membrane. It carries out the reaction ATP + H2O + 4 H(+)(in) = ADP + phosphate + 5 H(+)(out). Functionally, mitochondrial membrane ATP synthase (F(1)F(0) ATP synthase or Complex V) produces ATP from ADP in the presence of a proton gradient across the membrane which is generated by electron transport complexes of the respiratory chain. F-type ATPases consist of two structural domains, F(1) - containing the extramembraneous catalytic core and F(0) - containing the membrane proton channel, linked together by a central stalk and a peripheral stalk. During catalysis, ATP synthesis in the catalytic domain of F(1) is coupled via a rotary mechanism of the central stalk subunits to proton translocation. Subunits alpha and beta form the catalytic core in F(1). Rotation of the central stalk against the surrounding alpha(3)beta(3) subunits leads to hydrolysis of ATP in three separate catalytic sites on the beta subunits. The chain is ATP synthase subunit beta, mitochondrial (ATPB) from Actinidia deliciosa (Kiwi).